The sequence spans 287 residues: uncharacterized protein (287 aa).

Catalysis depends on charge relay system residues Thr-43 and Tyr-104. Tyr-130 serves as the catalytic Proton donor. Lys-158 serves as the catalytic Schiff-base intermediate with substrate.

The protein belongs to the DapA family. Homotetramer.

The protein localises to the cytoplasm. This is an uncharacterized protein from Pyrococcus horikoshii (strain ATCC 700860 / DSM 12428 / JCM 9974 / NBRC 100139 / OT-3).